A 164-amino-acid polypeptide reads, in one-letter code: NADH-quinone oxidoreductase subunit I 2 (164 aa).

4Fe-4S ferredoxin-type domains are found at residues 39–71 (IVLT…VVKA) and 81–110 (ESFR…LTPD). Positions 51, 54, 57, 61, 90, 93, 96, and 100 each coordinate [4Fe-4S] cluster.

The protein belongs to the complex I 23 kDa subunit family. In terms of assembly, NDH-1 is composed of 14 different subunits. Subunits NuoA, H, J, K, L, M, N constitute the membrane sector of the complex. Requires [4Fe-4S] cluster as cofactor.

It is found in the cell inner membrane. The catalysed reaction is a quinone + NADH + 5 H(+)(in) = a quinol + NAD(+) + 4 H(+)(out). Functionally, NDH-1 shuttles electrons from NADH, via FMN and iron-sulfur (Fe-S) centers, to quinones in the respiratory chain. The immediate electron acceptor for the enzyme in this species is believed to be ubiquinone. Couples the redox reaction to proton translocation (for every two electrons transferred, four hydrogen ions are translocated across the cytoplasmic membrane), and thus conserves the redox energy in a proton gradient. This Cereibacter sphaeroides (strain ATCC 17023 / DSM 158 / JCM 6121 / CCUG 31486 / LMG 2827 / NBRC 12203 / NCIMB 8253 / ATH 2.4.1.) (Rhodobacter sphaeroides) protein is NADH-quinone oxidoreductase subunit I 2.